Here is a 774-residue protein sequence, read N- to C-terminus: Lysyl oxidase homolog 2 (774 aa).

The first 25 residues, 1 to 25 (MERRGSSCLCRCLALLALLPTLSLA), serve as a signal peptide directing secretion. SRCR domains follow at residues 58 to 159 (LRLA…VVCS), 188 to 302 (IRAI…VSCV), 326 to 425 (VRLR…VRCN), and 435 to 544 (LRLN…VACS). 9 cysteine pairs are disulfide-bonded: Cys84/Cys148, Cys97/Cys158, Cys128/Cys138, Cys218/Cys291, Cys231/Cys301, Cys265/Cys275, Cys351/Cys414, Cys364/Cys424, and Cys395/Cys405. N-linked (GlcNAc...) asparagine glycosylation is present at Asn288. N-linked (GlcNAc...) asparagine glycosylation occurs at Asn455. Intrachain disulfides connect Cys464-Cys530, Cys477-Cys543, and Cys511-Cys521. Residues 548–751 (PDLVLNAEIV…WMYNCHIGGS (204 aa)) are lysyl-oxidase like. Residues Asp549 and Leu550 each coordinate Ca(2+). Cystine bridges form between Cys573/Cys625, Cys579/Cys695, Cys657/Cys673, and Cys663/Cys685. Residues His626, His628, and His630 each coordinate Cu cation. Asn644 is a glycosylation site (N-linked (GlcNAc...) asparagine). Residues 653–689 (KASFCLEDTECEGDIQKSYECANFGEQGITMGCWDMY) constitute a cross-link (lysine tyrosylquinone (Lys-Tyr)). The residue at position 689 (Tyr689) is a 2',4',5'-topaquinone. Residues Glu722, Asp724, Asn727, and Asn728 each contribute to the Ca(2+) site. The cysteines at positions 732 and 746 are disulfide-linked.

This sequence belongs to the lysyl oxidase family. As to quaternary structure, component of some chromatin repressor complex. Interacts with SNAI1. Interacts with TAF10. Interacts with HSPA5. Interacts with EFEMP2. Cu cation is required as a cofactor. It depends on lysine tyrosylquinone residue as a cofactor. Post-translationally, the lysine tyrosylquinone cross-link (LTQ) is generated by condensation of the epsilon-amino group of a lysine with a topaquinone produced by oxidation of tyrosine. N-glycosylated. N-glycosylation on Asn-455 and Asn-644 may be essential for proper folding and secretion; may be composed of a fucosylated carbohydrates attached to a trimannose N-linked glycan core.

It localises to the secreted. It is found in the extracellular space. The protein resides in the extracellular matrix. The protein localises to the basement membrane. Its subcellular location is the nucleus. It localises to the chromosome. It is found in the endoplasmic reticulum. The catalysed reaction is L-lysyl-[protein] + O2 + H2O = (S)-2-amino-6-oxohexanoyl-[protein] + H2O2 + NH4(+). Specifically inhibited by a mouse monoclonal antibody AB0023, inhibition occurs in a non-competitive manner. Functionally, mediates the post-translational oxidative deamination of lysine residues on target proteins leading to the formation of deaminated lysine (allysine). Acts as a transcription corepressor and specifically mediates deamination of trimethylated 'Lys-4' of histone H3 (H3K4me3), a specific tag for epigenetic transcriptional activation. Shows no activity against histone H3 when it is trimethylated on 'Lys-9' (H3K9me3) or 'Lys-27' (H3K27me3) or when 'Lys-4' is monomethylated (H3K4me1) or dimethylated (H3K4me2). Also mediates deamination of methylated TAF10, a member of the transcription factor IID (TFIID) complex, which induces release of TAF10 from promoters, leading to inhibition of TFIID-dependent transcription. LOXL2-mediated deamination of TAF10 results in transcriptional repression of genes required for embryonic stem cell pluripotency including POU5F1/OCT4, NANOG, KLF4 and SOX2. Involved in epithelial to mesenchymal transition (EMT) via interaction with SNAI1 and participates in repression of E-cadherin CDH1, probably by mediating deamination of histone H3. During EMT, involved with SNAI1 in negatively regulating pericentromeric heterochromatin transcription. SNAI1 recruits LOXL2 to pericentromeric regions to oxidize histone H3 and repress transcription which leads to release of heterochromatin component CBX5/HP1A, enabling chromatin reorganization and acquisition of mesenchymal traits. Interacts with the endoplasmic reticulum protein HSPA5 which activates the IRE1-XBP1 pathway of the unfolded protein response, leading to expression of several transcription factors involved in EMT and subsequent EMT induction. When secreted into the extracellular matrix, promotes cross-linking of extracellular matrix proteins by mediating oxidative deamination of peptidyl lysine residues in precursors to fibrous collagen and elastin. Acts as a regulator of sprouting angiogenesis, probably via collagen IV scaffolding. Acts as a regulator of chondrocyte differentiation, probably by regulating expression of factors that control chondrocyte differentiation. The chain is Lysyl oxidase homolog 2 (LOXL2) from Bos taurus (Bovine).